Reading from the N-terminus, the 227-residue chain is Mitochondrial cardiolipin hydrolase (227 aa).

Topologically, residues 1-14 (MDVFKQMSFKELMK) are mitochondrial intermembrane. The helical transmembrane segment at 15 to 33 (VLGLGTVAFVLGVEWLNWL) threads the bilayer. Residues 34-227 (TRRLRDSRGP…LQSKNGQIKK (194 aa)) are Cytoplasmic-facing. Residues 153–180 (SAVHMHHKFALVDGRKLISGSLNWTLTA) form the PLD phosphodiesterase domain. Active-site residues include His-158, Lys-160, and Asp-165.

The protein belongs to the phospholipase D family. MitoPLD/Zucchini subfamily. In terms of assembly, homodimer.

The protein resides in the mitochondrion outer membrane. The catalysed reaction is a cardiolipin + H2O = a 1,2-diacyl-sn-glycero-3-phospho-(1'-sn-glycerol) + a 1,2-diacyl-sn-glycero-3-phosphate + H(+). Its function is as follows. Presents phospholipase and nuclease activities, depending on the different physiological conditions. Plays a key role in mitochondrial fusion and fission via its phospholipase activity. In its phospholipase role, it uses the mitochondrial lipid cardiolipin as substrate to generate phosphatidate (PA or 1,2-diacyl-sn-glycero-3-phosphate), a second messenger signaling lipid. Production of PA facilitates Mitofusin-mediated fusion, whereas the cleavage of PA by the Lipin family of phosphatases produces diacylgycerol (DAG) which promotes mitochondrial fission. Regulates mitochondrial shape through facilitating mitochondrial fusion. During spermatogenesis, plays a critical role in PIWI-interacting RNA (piRNA) biogenesis. piRNAs provide essential protection against the activity of mobile genetic elements. piRNA-mediated transposon silencing is thus critical for maintaining genome stability, in particular in germline cells when transposons are mobilized as a consequence of wide-spread genomic demethylation. Has been shown to be a backbone-non-specific, single strand-specific nuclease, cleaving either RNA or DNA substrates with similar affinity. Produces 5' phosphate and 3' hydroxyl termini, suggesting it could directly participate in the processing of primary piRNA transcripts. Has been proposed to act as a cardiolipin hydrolase to generate phosphatidic acid at mitochondrial surface. Although it cannot be excluded that it can act as a phospholipase in some circumstances, this activity could not be confirmed. This Danio rerio (Zebrafish) protein is Mitochondrial cardiolipin hydrolase (pld6).